The chain runs to 60 residues: Phospholipase A2 (60 aa).

Residues Tyr27, Gly29, and Gly31 each coordinate Ca(2+). A disulfide bond links Cys28 and Cys44. His47 is a catalytic residue. Residue Asp48 coordinates Ca(2+).

It depends on Ca(2+) as a cofactor. Expressed by the venom gland.

It is found in the secreted. The catalysed reaction is a 1,2-diacyl-sn-glycero-3-phosphocholine + H2O = a 1-acyl-sn-glycero-3-phosphocholine + a fatty acid + H(+). Snake venom phospholipase A2 (PLA2) that displays mild but significant inhibition of mouse platelet aggregation induced by ADP and collagen. In vivo, induces edema in the foot pads and gastrocnemius muscles of mice but shows no myonecrotic or myotoxic activity. PA2 catalyzes the calcium-dependent hydrolysis of the 2-acyl groups in 3-sn-phosphoglycerides. The chain is Phospholipase A2 from Lachesis muta rhombeata (Bushmaster).